Reading from the N-terminus, the 144-residue chain is Effector EagT6 (144 aa).

As to quaternary structure, homodimer. Two dimers interact with Tse6; this interaction is crucial for Tse6 loading onto VgrG1a.

Its function is as follows. Plays an essential role in toxin Tse6 delivery to target cells and specifically in the loading of Tse6 onto VgrG1a. This Pseudomonas aeruginosa (strain ATCC 15692 / DSM 22644 / CIP 104116 / JCM 14847 / LMG 12228 / 1C / PRS 101 / PAO1) protein is Effector EagT6.